The sequence spans 151 residues: Ribonuclease H (151 aa).

Residues 1 to 143 (MSDVVVIHTD…ADVLATRGLQ (143 aa)) enclose the RNase H type-1 domain. 4 residues coordinate Mg(2+): Asp10, Glu49, Asp71, and Asp135.

This sequence belongs to the RNase H family. As to quaternary structure, monomer. It depends on Mg(2+) as a cofactor.

It is found in the cytoplasm. It catalyses the reaction Endonucleolytic cleavage to 5'-phosphomonoester.. In terms of biological role, endonuclease that specifically degrades the RNA of RNA-DNA hybrids. In Mycolicibacterium gilvum (strain PYR-GCK) (Mycobacterium gilvum (strain PYR-GCK)), this protein is Ribonuclease H.